The chain runs to 366 residues: MTDLLASTLEHLETLVSFDTRNPPRAIAAEGGIFDYLRAQLPGFQVEVIDHGDGAVSLYAVRGTPKYLFNVHLDTVPDSPHWSADPHVMRRTEDRVIGLGVCDIKGAAAALVAAANAGDGDAAFLFSSDEEANDPRCIAAFLARGLPYDAVLVAEPTMSEAVLAHRGISSVLMRFAGRAGHASGKQDPAASALHQAMRWGGKALDHVESLAHARFGGLTGLRFNIGRVDGGIKANMIAPAAELRFGFRPLPSMDVDGLLATFAGFADPAAAHFEETFRGPSLPSGDIARAEERRLAARDVADALDLPIGNAVDFWTEASLFSAGGYTALVYGPGDIAQAHTADEFVTLAQLQRYVESVNRIINGSH.

Residues histidine 72 and aspartate 103 each coordinate Co(2+). Glutamate 130 acts as the Proton donor/acceptor in catalysis. Glutamate 155 contributes to the Co(2+) binding site.

Belongs to the peptidase M20A family. N-acetylcitrulline deacetylase subfamily. As to quaternary structure, forms homodimers in the crystal, but higher order oligomers may form in solution. Co(2+) is required as a cofactor.

The catalysed reaction is N(2)-acetyl-L-citrulline + H2O = L-citrulline + acetate. It catalyses the reaction N(2)-acetyl-L-ornithine + H2O = L-ornithine + acetate. It participates in amino-acid biosynthesis; L-arginine biosynthesis. Functionally, catalyzes the deacetylation of N-acetyl-L-citrulline to produce L-citrulline. This is a step in an alternative arginine biosynthesis pathway. Is also able to catalyze the deacetylation of N-acetylornithine in vitro, with almost equal velocity. However, this reaction may be not relevant in vivo since Xanthomonas does not possess the canonical argF gene and cannot convert ornithine to citrulline via ArgF'. This is N-acetyl-L-citrulline deacetylase from Xanthomonas campestris pv. campestris (strain ATCC 33913 / DSM 3586 / NCPPB 528 / LMG 568 / P 25).